Here is a 245-residue protein sequence, read N- to C-terminus: tRNA1(Val) (adenine(37)-N6)-methyltransferase (245 aa).

The protein belongs to the methyltransferase superfamily. tRNA (adenine-N(6)-)-methyltransferase family.

Its subcellular location is the cytoplasm. It catalyses the reaction adenosine(37) in tRNA1(Val) + S-adenosyl-L-methionine = N(6)-methyladenosine(37) in tRNA1(Val) + S-adenosyl-L-homocysteine + H(+). In terms of biological role, specifically methylates the adenine in position 37 of tRNA(1)(Val) (anticodon cmo5UAC). The polypeptide is tRNA1(Val) (adenine(37)-N6)-methyltransferase (Shigella sonnei (strain Ss046)).